The following is a 202-amino-acid chain: Holliday junction resolvase RecU (202 aa).

Residues threonine 85, aspartate 87, glutamate 100, and glutamine 119 each coordinate Mg(2+).

The protein belongs to the RecU family. Mg(2+) is required as a cofactor.

The protein localises to the cytoplasm. It carries out the reaction Endonucleolytic cleavage at a junction such as a reciprocal single-stranded crossover between two homologous DNA duplexes (Holliday junction).. In terms of biological role, endonuclease that resolves Holliday junction intermediates in genetic recombination. Cleaves mobile four-strand junctions by introducing symmetrical nicks in paired strands. Promotes annealing of linear ssDNA with homologous dsDNA. Required for DNA repair, homologous recombination and chromosome segregation. The chain is Holliday junction resolvase RecU from Streptococcus uberis (strain ATCC BAA-854 / 0140J).